Here is a 220-residue protein sequence, read N- to C-terminus: Apoptosis regulator BALF1 (220 aa).

This sequence belongs to the Epstein-Barr virus BALF1 family. In terms of assembly, interacts with BHRF1; this interaction modulates BHRF1 activity. Interacts with host BAX and BAK1.

The protein resides in the host cytoplasm. Modulates the antiapoptotic activity of the viral protein BHRF1. May also play an active part in oncogenesis in Burkitt's lymphomy and nasopharyngeal carcinoma. The sequence is that of Apoptosis regulator BALF1 from Homo sapiens (Human).